A 78-amino-acid chain; its full sequence is Defensin-like protein 90 (78 aa).

An N-terminal signal peptide occupies residues 1–25 (MTTKMFSYVLLHSLMMFAIILSSMG). Intrachain disulfides connect cysteine 33–cysteine 70, cysteine 38–cysteine 59, cysteine 44–cysteine 68, and cysteine 48–cysteine 69.

Belongs to the DEFL family.

The protein resides in the secreted. The protein is Defensin-like protein 90 of Arabidopsis thaliana (Mouse-ear cress).